The following is a 483-amino-acid chain: BTB/POZ domain and ankyrin repeat-containing protein NBCL (483 aa).

The BTB domain occupies 25-109; the sequence is SDVTFSVEGR…LYSGQVSIVP (85 aa). Residues 115-129 form a C2HC NPR-type zinc finger; that stretch reads RPNCGERACWHTHCT. Residues C118, C123, H125, and C128 each coordinate Zn(2+). 4 ANK repeats span residues 254 to 283, 284 to 313, 318 to 347, and 351 to 385; these read QKIR…LNLD, EALA…DVNY, SGKT…DPNV, and DGVT…KLRL. A disordered region spans residues 401 to 437; that stretch reads EGNANANSSNNNNAPCSAATPIYPPMNEDHNSSSSNA. Residues 403 to 419 show a composition bias toward low complexity; that stretch reads NANANSSNNNNAPCSAA.

It belongs to the plant 'ANKYRIN-BTB/POZ' family. 'NOOT-BOP-COCH-like' (NBCL) subfamily. As to quaternary structure, homodimer. Interacts with APP1 around the plasma membrane and in the nucleus; this interaction disturbs APP1-mediated regulation of the nuclear transcription factor Y subunit (NF-YA1). Mainly expressed in root nodules, to a lesser extent in shoot apical meristems (SAM) and root meristems (RM), and barely in leaves, non-nodulating roots and root apical meristems (RAM).

The protein localises to the nucleus. It localises to the cytoplasm. The protein resides in the cell membrane. It functions in the pathway protein modification; protein ubiquitination. Its function is as follows. May act as a substrate-specific adapter of an E3 ubiquitin-protein ligase complex (CUL3-RBX1-BTB) which mediates the ubiquitination and subsequent proteasomal degradation of target proteins. Transcriptional co-regulator involved in the promotion of leaf and floral meristem fate and determinacy. Required for the abscission of senescent organs, probably by regulating the cell wall disorganization in abscission zones (AZs, e.g. pulvini at the base of leaves). Involved in the coordination of the symbiotic nodule developmental program; promotes the formation of root nodules by interacting directly with APP1 to modulate the expression of the nuclear transcription factor Y subunit (NF-YA1), a key nodulin. Necessary for the robust maintenance of nodule identity throughout the nodule developmental program. The chain is BTB/POZ domain and ankyrin repeat-containing protein NBCL from Lotus japonicus (Lotus corniculatus var. japonicus).